The primary structure comprises 230 residues: N-(5'-phosphoribosyl)anthranilate isomerase (230 aa).

Belongs to the TrpF family.

The catalysed reaction is N-(5-phospho-beta-D-ribosyl)anthranilate = 1-(2-carboxyphenylamino)-1-deoxy-D-ribulose 5-phosphate. The protein operates within amino-acid biosynthesis; L-tryptophan biosynthesis; L-tryptophan from chorismate: step 3/5. This chain is N-(5'-phosphoribosyl)anthranilate isomerase, found in Syntrophus aciditrophicus (strain SB).